Consider the following 454-residue polypeptide: Guanine deaminase (454 aa).

2 residues coordinate Zn(2+): His-82 and His-84. Substrate-binding positions include 84–87 (HASQ), 213–214 (RF), 240–243 (HISE), and Asp-330. Residues His-240 and Asp-330 each coordinate Zn(2+). Residue Ser-453 is modified to Phosphoserine.

Belongs to the metallo-dependent hydrolases superfamily. ATZ/TRZ family. As to quaternary structure, homodimer. Requires Zn(2+) as cofactor.

It carries out the reaction guanine + H2O + H(+) = xanthine + NH4(+). The protein operates within purine metabolism; guanine degradation; xanthine from guanine: step 1/1. Catalyzes the hydrolytic deamination of guanine, producing xanthine and ammonia. The polypeptide is Guanine deaminase (Homo sapiens (Human)).